A 37-amino-acid polypeptide reads, in one-letter code: Large ribosomal subunit protein bL36c (37 aa).

The protein belongs to the bacterial ribosomal protein bL36 family.

It is found in the plastid. It localises to the chloroplast. The sequence is that of Large ribosomal subunit protein bL36c (rpl36) from Nephroselmis olivacea (Green alga).